A 491-amino-acid chain; its full sequence is Carboxypeptidase SOL1 (491 aa).

Positions 1–25 (MSKLRFFQSLLISTVICFFLPSINA) are cleaved as a signal peptide. At 26–452 (RGGHSDHIHP…LLTQFFTETN (427 aa)) the chain is on the extracellular side. An N-linked (GlcNAc...) asparagine glycan is attached at N39. One can recognise a Peptidase M14 domain in the interval 64–338 (GYMTNDDLEK…KSMLNLVASL (275 aa)). Positions 125 and 128 each coordinate Zn(2+). Substrate is bound by residues 125–128 (HGDE) and 186–187 (NR). H226 lines the Zn(2+) pocket. N268 carries N-linked (GlcNAc...) asparagine glycosylation. Y286 contacts substrate. The active-site Proton donor/acceptor is E308. A helical transmembrane segment spans residues 453–470 (NGITLTLFVVVVFLCFLL). Over 471-491 (QRRVRFNLWKQRQSSRRSITV) the chain is Cytoplasmic.

This sequence belongs to the peptidase M14 family. The cofactor is Zn(2+). Expressed in roots, shoots, leaves, flowers and siliques.

The protein resides in the endosome membrane. Possesses in vitro carboxypeptidase activity against the C-terminal arginine and lysine residues. Involved in the maturation of CLE19. Removes the C-terminal arginine residue of CLE19 proprotein. The cleavage of the C-terminal arginine residue is necessary for CLE19 activity in vivo. Is not involved in generating active CLV3. Is not involved in CLE19 or CLV3 perception. The protein is Carboxypeptidase SOL1 of Arabidopsis thaliana (Mouse-ear cress).